Consider the following 358-residue polypeptide: Thiol protease aleurain (358 aa).

An N-terminal signal peptide occupies residues Met1–Ala21. Residues Ala22–Val42 form an interaction with VSR1 region. A propeptide spans Ala22 to Ala140 (activation peptide). A glycan (N-linked (GlcNAc...) asparagine) is linked at Asn125. 2 cysteine pairs are disulfide-bonded: Cys162-Cys205 and Cys196-Cys238. Cys165 is a catalytic residue. Asn254 carries N-linked (GlcNAc...) asparagine glycosylation. Cys296 and Cys346 are oxidised to a cystine. Residues His305 and Asn325 contribute to the active site.

This sequence belongs to the peptidase C1 family. In terms of assembly, interacts with VSR1/BP80B. Expressed in leaves (at protein level).

The protein resides in the vacuole. The enzyme catalyses Hydrolysis of proteins, acting as an aminopeptidase (notably, cleaving Arg-|-Xaa bonds) as well as an endopeptidase.. May play a role in proteolysis leading to mobilization of nitrogen during senescence and starvation. In Arabidopsis thaliana (Mouse-ear cress), this protein is Thiol protease aleurain.